The following is a 227-amino-acid chain: MPEINTDHLDKQQVQLLAEMCILIDENDNKIGAETKKNCHLNENIEKGLLHRAFSVFLFNTENKLLLQQRSDAKITLPGCFTNTCCSHPLSNPGELEENDALGVRRAAQRRLKAELGIPLEEVPPEEINYLTRIHYKAQSDGIWGEHEIDYILLVRKNVTLNPDPNEIKSYCYVSKEELKELLKKAASGEIKITPWFKIIAETFLFKWWDNLNHLNQFVDHEKIYRI.

Substrate is bound at residue K36. Mg(2+) contacts are provided by H40 and H51. Residues 49 to 199 (LLHRAFSVFL…EIKITPWFKI (151 aa)) enclose the Nudix hydrolase domain. 2 residues coordinate substrate: R70 and K74. The active site involves C86. S87 lines the substrate pocket. E146 and E148 together coordinate Mg(2+). E148 is a catalytic residue. K176 bears the N6-acetyllysine mark. A Microbody targeting signal motif is present at residues 225-227 (YRI).

Belongs to the IPP isomerase type 1 family. In terms of assembly, monomer. It depends on Mg(2+) as a cofactor.

The protein localises to the peroxisome. The enzyme catalyses isopentenyl diphosphate = dimethylallyl diphosphate. It participates in isoprenoid biosynthesis; dimethylallyl diphosphate biosynthesis; dimethylallyl diphosphate from isopentenyl diphosphate: step 1/1. Functionally, catalyzes the 1,3-allylic rearrangement of the homoallylic substrate isopentenyl (IPP) to its highly electrophilic allylic isomer, dimethylallyl diphosphate (DMAPP). The chain is Isopentenyl-diphosphate Delta-isomerase 1 (IDI1) from Pongo abelii (Sumatran orangutan).